Consider the following 213-residue polypeptide: Probable germin-like protein subfamily 2 member 5 (213 aa).

The signal sequence occupies residues 1 to 22 (MASFATHLVVVVTMLFVAMASA). Cys-29 and Cys-44 form a disulfide bridge. Residues 58–203 (KGLANIAATN…SFQLKHKQVK (146 aa)) form the Cupin type-1 domain. N-linked (GlcNAc...) asparagine glycosylation occurs at Asn-67. Mn(2+) contacts are provided by His-106, His-108, Glu-113, and His-152.

The protein belongs to the germin family. Oligomer (believed to be a pentamer but probably hexamer).

It is found in the secreted. The protein resides in the extracellular space. Its subcellular location is the apoplast. May play a role in plant defense. Probably has no oxalate oxidase activity even if the active site is conserved. The polypeptide is Probable germin-like protein subfamily 2 member 5 (Arabidopsis thaliana (Mouse-ear cress)).